The following is an 88-amino-acid chain: Small ribosomal subunit protein bS16 (88 aa).

It belongs to the bacterial ribosomal protein bS16 family.

The chain is Small ribosomal subunit protein bS16 from Desulfitobacterium hafniense (strain DSM 10664 / DCB-2).